A 438-amino-acid polypeptide reads, in one-letter code: Cell division cycle-associated 7-like protein (438 aa).

The Integrase domain-binding motif 1 (IBM1) motif lies at 9–33; sequence IPKEVADIFNAPSDDEEFVGFQDDV. Position 21 is a phosphoserine (Ser-21). Positions 55 to 114 are PSIP1-binding; it reads ACLHSKYFTEELRRIFKEDTDSDNEDFEGFTESELNIGSNPELIESELSDGDKTHPMMSD. The Integrase domain-binding motif 2 (IBM2) signature appears at 62–88; sequence FTEELRRIFKEDTDSDNEDFEGFTESE. Residues 72–199 are disordered; the sequence is EDTDSDNEDF…ESRAESQETS (128 aa). At Thr-74 the chain carries Phosphothreonine. Positions 74–85 are enriched in acidic residues; the sequence is TDSDNEDFEGFT. Phosphoserine is present on Ser-76. Position 85 is a phosphothreonine (Thr-85). Phosphoserine is present on residues Ser-100, Ser-103, Ser-113, Ser-135, Ser-136, Ser-183, and Ser-185. Residues 113–123 show a composition bias toward acidic residues; it reads SDEEDDDDEEE. The segment covering 166–183 has biased composition (basic and acidic residues); that stretch reads TDLRREKSCRQPKEKEDS. The tract at residues 201–223 is MYC-binding; the sequence is ALLKRAMNIKENKAMLAQLLAEL. Glycyl lysine isopeptide (Lys-Gly) (interchain with G-Cter in SUMO2) cross-links involve residues Lys-210 and Lys-213. Ser-249 is subject to Phosphoserine.

Interacts with MYC. Interacts (via IBM motifs) with PSIP1 (via IBD domain); phosphorylation increases its affinity for PSIP1. Post-translationally, phosphorylation increases its interaction with PSIP1.

The protein localises to the cytoplasm. The protein resides in the nucleus. In terms of biological role, plays a role in transcriptional regulation as a repressor that inhibits monoamine oxidase A (MAOA) activity and gene expression by binding to the promoter. Plays an important oncogenic role in mediating the full transforming effect of MYC in medulloblastoma cells. Involved in apoptotic signaling pathways; May act downstream of P38-kinase and BCL-2, but upstream of CASP3/caspase-3 as well as CCND1/cyclin D1 and E2F1. This Rattus norvegicus (Rat) protein is Cell division cycle-associated 7-like protein (Cdca7l).